We begin with the raw amino-acid sequence, 731 residues long: DNA ligase (731 aa).

NAD(+)-binding positions include 47–51, 96–97, and E133; these read DAEYD and SI. The active-site N6-AMP-lysine intermediate is the K135. Residues R156, E192, K313, and K337 each contribute to the NAD(+) site. Residues C462, C465, C480, and C486 each coordinate Zn(2+). A BRCT domain is found at 645–731; that stretch reads AATLPLAGMT…RGTPPNAGGA (87 aa).

This sequence belongs to the NAD-dependent DNA ligase family. LigA subfamily. The cofactor is Mg(2+). Mn(2+) serves as cofactor.

The catalysed reaction is NAD(+) + (deoxyribonucleotide)n-3'-hydroxyl + 5'-phospho-(deoxyribonucleotide)m = (deoxyribonucleotide)n+m + AMP + beta-nicotinamide D-nucleotide.. Its function is as follows. DNA ligase that catalyzes the formation of phosphodiester linkages between 5'-phosphoryl and 3'-hydroxyl groups in double-stranded DNA using NAD as a coenzyme and as the energy source for the reaction. It is essential for DNA replication and repair of damaged DNA. This chain is DNA ligase, found in Acidovorax sp. (strain JS42).